The primary structure comprises 461 residues: tRNA modification GTPase MnmE (461 aa).

(6S)-5-formyl-5,6,7,8-tetrahydrofolate contacts are provided by R22, E87, and R126. A TrmE-type G domain is found at 223-382 (GLSTVILGRP…LEEAIAALFF (160 aa)). N233 is a binding site for K(+). Residues 233-238 (NVGKSS), 252-258 (TDIAGTT), and 277-280 (DTAG) contribute to the GTP site. S237 contributes to the Mg(2+) binding site. The K(+) site is built by T252, I254, and T257. Residue T258 participates in Mg(2+) binding. Residue K461 coordinates (6S)-5-formyl-5,6,7,8-tetrahydrofolate.

The protein belongs to the TRAFAC class TrmE-Era-EngA-EngB-Septin-like GTPase superfamily. TrmE GTPase family. In terms of assembly, homodimer. Heterotetramer of two MnmE and two MnmG subunits. It depends on K(+) as a cofactor.

The protein localises to the cytoplasm. Exhibits a very high intrinsic GTPase hydrolysis rate. Involved in the addition of a carboxymethylaminomethyl (cmnm) group at the wobble position (U34) of certain tRNAs, forming tRNA-cmnm(5)s(2)U34. The chain is tRNA modification GTPase MnmE from Lysinibacillus sphaericus (strain C3-41).